Consider the following 286-residue polypeptide: Release factor glutamine methyltransferase (286 aa).

S-adenosyl-L-methionine-binding positions include 121-125, Asp-144, Trp-172, and Asn-188; that span reads GTGTG. 188 to 191 contacts substrate; the sequence is NPPY.

The protein belongs to the protein N5-glutamine methyltransferase family. PrmC subfamily.

The catalysed reaction is L-glutaminyl-[peptide chain release factor] + S-adenosyl-L-methionine = N(5)-methyl-L-glutaminyl-[peptide chain release factor] + S-adenosyl-L-homocysteine + H(+). Its function is as follows. Methylates the class 1 translation termination release factors RF1/PrfA and RF2/PrfB on the glutamine residue of the universally conserved GGQ motif. The sequence is that of Release factor glutamine methyltransferase from Vibrio cholerae serotype O1 (strain ATCC 39315 / El Tor Inaba N16961).